The sequence spans 863 residues: DNA mismatch repair protein MutS (863 aa).

615–622 (GPNMAGKS) serves as a coordination point for ATP.

It belongs to the DNA mismatch repair MutS family.

Its function is as follows. This protein is involved in the repair of mismatches in DNA. It is possible that it carries out the mismatch recognition step. This protein has a weak ATPase activity. The polypeptide is DNA mismatch repair protein MutS (Pelotomaculum thermopropionicum (strain DSM 13744 / JCM 10971 / SI)).